Consider the following 87-residue polypeptide: Mitochondrial import protein 2 (87 aa).

At 1-53 (MADSEDTSVILQGIDTINSVEGLEEDGYLSDEDTSLSNELADAQRQWEESLQQ) the chain is on the cytoplasmic side. Residues 54–71 (LNKLLNWVLLPLLGKYIG) traverse the membrane as a helical segment. At 72 to 87 (RRMAKTLWSRFIEHFV) the chain is on the mitochondrial intermembrane side.

The protein belongs to the MIM2 family. Component of the MIM complex containing at least MIM1 and MIM2. Interacts with MIM1; interaction is direct.

Its subcellular location is the mitochondrion outer membrane. Functionally, component of the MIM complex required for outer membrane protein import. Involved in import of the subset of proteins with multiple alpha-helical transmembrane segments, including UGO1, TOM20 and FZO1. The polypeptide is Mitochondrial import protein 2 (Saccharomyces cerevisiae (strain ATCC 204508 / S288c) (Baker's yeast)).